A 493-amino-acid polypeptide reads, in one-letter code: Probable phospho-2-dehydro-3-deoxyheptonate aldolase, chloroplastic (493 aa).

The transit peptide at 1–58 (MAMSNTSALASKLLPSCKPHQPTLTFFSPSTTCQKKPRSSRPISAAVHVTQPPKTPIS) directs the protein to the chloroplast.

This sequence belongs to the class-II DAHP synthase family.

Its subcellular location is the plastid. The protein resides in the chloroplast. The enzyme catalyses D-erythrose 4-phosphate + phosphoenolpyruvate + H2O = 7-phospho-2-dehydro-3-deoxy-D-arabino-heptonate + phosphate. The protein operates within metabolic intermediate biosynthesis; chorismate biosynthesis; chorismate from D-erythrose 4-phosphate and phosphoenolpyruvate: step 1/7. This Catharanthus roseus (Madagascar periwinkle) protein is Probable phospho-2-dehydro-3-deoxyheptonate aldolase, chloroplastic (DHS1).